A 417-amino-acid chain; its full sequence is MSVLSSILGMVVLIAIAVLLSNNRKAISIRTVVGALAIQVGFAALILYVPAGKQALGAAADMVSNVIAYGNDGINFVFGGLADPSKPSGFIFAVKVLPIIVFFSGLISVLYYLGIMQVVIKVLGGALQKALGTSKAESMSAAANIFVGQTEAPLVVRPYIKNMTQSELFAIMVGGTASIAGSVMAGYAGMGVPLTYLIAASFMAAPAGLLFAKLMFPQTEQFTDKQPEDNDSEKPTNVLEAMAGGASAGMQLALNVGAMLIAFVGLIALINGILSGVGGWFGYGDLTLQSIFGLIFKPLAYLIGVTDGAEAGIAGQMIGMKLAVNEFVGYLEFAKYLQPDSAIVLTEKTKAIITFALCGFANFSSIAILIGGLGGMAPSRRSDVARLGIKAVIAGTLANLMSATIAGLFIGLGAAAL.

A run of 9 helical transmembrane segments spans residues 1 to 21 (MSVL…VLLS), 32 to 52 (VVGA…VPAG), 96 to 116 (VLPI…LGIM), 168 to 188 (LFAI…AGYA), 192 to 212 (VPLT…LLFA), 261 to 281 (IAFV…GGWF), 286 to 306 (LTLQ…IGVT), 351 to 371 (AIIT…ILIG), and 392 to 412 (VIAG…FIGL).

This sequence belongs to the concentrative nucleoside transporter (CNT) (TC 2.A.41) family.

The protein localises to the cell inner membrane. This is an uncharacterized protein from Haemophilus influenzae (strain ATCC 51907 / DSM 11121 / KW20 / Rd).